The following is a 274-amino-acid chain: Large ribosomal subunit protein uL2cz/uL2cy (274 aa).

Residues 224-274 (NPVDHPHGGGEGRAPIGRKKPATPWGYPALGRRSRKRNKYSDNLILRRRSK) are disordered.

The protein belongs to the universal ribosomal protein uL2 family. Part of the 50S ribosomal subunit.

Its subcellular location is the plastid. The protein localises to the chloroplast. The polypeptide is Large ribosomal subunit protein uL2cz/uL2cy (rpl2-A) (Morus indica (Mulberry)).